The following is a 510-amino-acid chain: Holliday junction branch migration ATPase PINA (510 aa).

In terms of assembly, homohexamer. Interacts with Holliday junction resolvase Hjc, interacts with helicase Hjm (Hel308).

The catalysed reaction is ATP + H2O = ADP + phosphate + H(+). Important for growth at low temperatures (less than 65 degrees Celsius in this organism). Promotes Holliday junction (HJ) branch migration and unwinds Y-shaped DNA (but not replication forks or dsDNA) in an ATP hydrolysis-dependent manner. Stimulates cleavage by HJ resolvase Hjc. Hjc, Hjm (Hel308) and PINA coordinate HJ migration and cleavage of replication forks in a coordinated way. Probably acts as an ATP-dependent pump that pulls DNA through the hexamer. The chain is Holliday junction branch migration ATPase PINA from Sulfolobus acidocaldarius (strain ATCC 33909 / DSM 639 / JCM 8929 / NBRC 15157 / NCIMB 11770).